We begin with the raw amino-acid sequence, 258 residues long: Small ribosomal subunit protein uS2 (258 aa).

Belongs to the universal ribosomal protein uS2 family.

The polypeptide is Small ribosomal subunit protein uS2 (Leuconostoc mesenteroides subsp. mesenteroides (strain ATCC 8293 / DSM 20343 / BCRC 11652 / CCM 1803 / JCM 6124 / NCDO 523 / NBRC 100496 / NCIMB 8023 / NCTC 12954 / NRRL B-1118 / 37Y)).